The sequence spans 535 residues: CTP synthase (535 aa).

The tract at residues M1–L267 is amidoligase domain. S13 provides a ligand contact to CTP. S13 lines the UTP pocket. Position 14-19 (S14–I19) interacts with ATP. An L-glutamine-binding site is contributed by Y54. D71 serves as a coordination point for ATP. Residues D71 and E141 each contribute to the Mg(2+) site. Residues D148–E150, K188–Q193, and K224 contribute to the CTP site. UTP contacts are provided by residues K188 to Q193 and K224. R240–A242 contacts ATP. Positions T293–K535 constitute a Glutamine amidotransferase type-1 domain. G355 contacts L-glutamine. Residue C382 is the Nucleophile; for glutamine hydrolysis of the active site. Residues L383–Q386, E406, and R463 each bind L-glutamine. Catalysis depends on residues H508 and E510.

Belongs to the CTP synthase family. As to quaternary structure, homotetramer.

It carries out the reaction UTP + L-glutamine + ATP + H2O = CTP + L-glutamate + ADP + phosphate + 2 H(+). It catalyses the reaction L-glutamine + H2O = L-glutamate + NH4(+). The enzyme catalyses UTP + NH4(+) + ATP = CTP + ADP + phosphate + 2 H(+). It functions in the pathway pyrimidine metabolism; CTP biosynthesis via de novo pathway; CTP from UDP: step 2/2. Its activity is regulated as follows. Allosterically activated by GTP, when glutamine is the substrate; GTP has no effect on the reaction when ammonia is the substrate. The allosteric effector GTP functions by stabilizing the protein conformation that binds the tetrahedral intermediate(s) formed during glutamine hydrolysis. Inhibited by the product CTP, via allosteric rather than competitive inhibition. In terms of biological role, catalyzes the ATP-dependent amination of UTP to CTP with either L-glutamine or ammonia as the source of nitrogen. Regulates intracellular CTP levels through interactions with the four ribonucleotide triphosphates. The chain is CTP synthase from Staphylococcus haemolyticus (strain JCSC1435).